We begin with the raw amino-acid sequence, 624 residues long: Bifunctional 3'-phosphoadenosine 5'-phosphosulfate synthase 1 (624 aa).

Methionine 1 is modified (N-acetylmethionine). Residues 1–225 (MEIPGSLCKK…VVELLQERDI (225 aa)) are adenylyl-sulfate kinase. An N6-acetyllysine modification is found at lysine 12. 62 to 67 (GAGKTT) contributes to the ATP binding site. Adenosine 5'-phosphosulfate contacts are provided by residues 89–92 (DNIR), phenylalanine 101, 106–109 (REEN), 132–133 (IS), lysine 171, and 184–185 (GF). ATP is bound by residues cysteine 207, cysteine 212, 419-422 (QLRN), 521-525 (GRDPA), and alanine 563. Residues 234–624 (VKELYVPENK…VEYYKSLEKA (391 aa)) are sulfate adenylyltransferase.

This sequence in the N-terminal section; belongs to the APS kinase family. The protein in the C-terminal section; belongs to the sulfate adenylyltransferase family. As to quaternary structure, homodimer. In terms of tissue distribution, expressed in the neonatal brain and in cartilage.

It catalyses the reaction sulfate + ATP + H(+) = adenosine 5'-phosphosulfate + diphosphate. The catalysed reaction is adenosine 5'-phosphosulfate + ATP = 3'-phosphoadenylyl sulfate + ADP + H(+). Its pathway is sulfur metabolism; sulfate assimilation. Its function is as follows. Bifunctional enzyme with both ATP sulfurylase and APS kinase activity, which mediates two steps in the sulfate activation pathway. The first step is the transfer of a sulfate group to ATP to yield adenosine 5'-phosphosulfate (APS), and the second step is the transfer of a phosphate group from ATP to APS yielding 3'-phosphoadenylylsulfate (PAPS: activated sulfate donor used by sulfotransferase). In mammals, PAPS is the sole source of sulfate; APS appears to be only an intermediate in the sulfate-activation pathway. Required for normal biosynthesis of sulfated L-selectin ligands in endothelial cells. The chain is Bifunctional 3'-phosphoadenosine 5'-phosphosulfate synthase 1 (Papss1) from Mus musculus (Mouse).